We begin with the raw amino-acid sequence, 95 residues long: MSYINIIEKSENSIELELVNDDHSLSNALKESLLSKKGVVIASYGVEHPVLHPETGRYISNPTLVLKTEGVLAEKVLKEALRDIIDLCSNCLEEL.

This sequence belongs to the archaeal Rpo11/eukaryotic RPB11/RPC19 RNA polymerase subunit family. In terms of assembly, part of the RNA polymerase complex.

The protein resides in the cytoplasm. It catalyses the reaction RNA(n) + a ribonucleoside 5'-triphosphate = RNA(n+1) + diphosphate. DNA-dependent RNA polymerase (RNAP) catalyzes the transcription of DNA into RNA using the four ribonucleoside triphosphates as substrates. The sequence is that of DNA-directed RNA polymerase subunit Rpo11 from Methanococcus vannielii (strain ATCC 35089 / DSM 1224 / JCM 13029 / OCM 148 / SB).